The sequence spans 209 residues: Yop proteins translocation protein K (209 aa).

Its function is as follows. Belongs to an operon involved in the translocation of Yop proteins across the bacterial membranes or in the specific control of this function. This is Yop proteins translocation protein K (yscK) from Yersinia enterocolitica.